The following is a 115-amino-acid chain: Tyrosine-protein phosphatase 18 (115 aa).

One can recognise a Tyrosine-protein phosphatase domain in the interval 1 to 115 (WLMIVEQKCR…ETGSDAPMVV (115 aa)). Asp83 lines the substrate pocket.

This sequence belongs to the protein-tyrosine phosphatase family.

The catalysed reaction is O-phospho-L-tyrosyl-[protein] + H2O = L-tyrosyl-[protein] + phosphate. This Styela plicata (Wrinkled sea squirt) protein is Tyrosine-protein phosphatase 18 (STY-18).